We begin with the raw amino-acid sequence, 85 residues long: Large ribosomal subunit protein bL27 (85 aa).

The segment at 1–20 (MAHKKAGGSTRNGRDSEAKR) is disordered.

It belongs to the bacterial ribosomal protein bL27 family.

In Proteus mirabilis (strain HI4320), this protein is Large ribosomal subunit protein bL27.